Here is a 133-residue protein sequence, read N- to C-terminus: Small ribosomal subunit protein uS11 (133 aa).

The protein belongs to the universal ribosomal protein uS11 family. As to quaternary structure, part of the 30S ribosomal subunit. Interacts with proteins S7 and S18. Binds to IF-3.

In terms of biological role, located on the platform of the 30S subunit, it bridges several disparate RNA helices of the 16S rRNA. Forms part of the Shine-Dalgarno cleft in the 70S ribosome. The sequence is that of Small ribosomal subunit protein uS11 from Brevibacillus brevis (strain 47 / JCM 6285 / NBRC 100599).